Consider the following 186-residue polypeptide: ADP-ribosylation factor-like protein DDB_G0292332 (186 aa).

GTP contacts are provided by residues 24–31 (GVENVGKT), 78–82 (DIGGK), and 138–141 (NKQD).

Belongs to the small GTPase superfamily. Arf family.

Its function is as follows. Binds and exchanges GTP and GDP. The chain is ADP-ribosylation factor-like protein DDB_G0292332 from Dictyostelium discoideum (Social amoeba).